The primary structure comprises 185 residues: Elongation factor P (185 aa).

Belongs to the elongation factor P family.

Its subcellular location is the cytoplasm. It participates in protein biosynthesis; polypeptide chain elongation. Involved in peptide bond synthesis. Stimulates efficient translation and peptide-bond synthesis on native or reconstituted 70S ribosomes in vitro. Probably functions indirectly by altering the affinity of the ribosome for aminoacyl-tRNA, thus increasing their reactivity as acceptors for peptidyl transferase. The polypeptide is Elongation factor P (Pelotomaculum thermopropionicum (strain DSM 13744 / JCM 10971 / SI)).